The sequence spans 220 residues: Superoxide dismutase [Fe] (220 aa).

Fe cation is bound by residues His-26, His-73, Asp-164, and His-168.

The protein belongs to the iron/manganese superoxide dismutase family. Homodimer. Fe cation is required as a cofactor.

The catalysed reaction is 2 superoxide + 2 H(+) = H2O2 + O2. Destroys superoxide anion radicals which are normally produced within the cells and which are toxic to biological systems. The polypeptide is Superoxide dismutase [Fe] (sodB) (Campylobacter coli).